Reading from the N-terminus, the 140-residue chain is uncharacterized protein (140 aa).

This is an uncharacterized protein from Saccharomyces cerevisiae (strain ATCC 204508 / S288c) (Baker's yeast).